We begin with the raw amino-acid sequence, 125 residues long: Histone H1-like protein Hc1 (125 aa).

The interval 98 to 125 is disordered; sequence TKAKVKPTKKAAPKTKVKTAKKTRSTKK. A compositionally biased stretch (basic residues) spans 100-125; that stretch reads AKVKPTKKAAPKTKVKTAKKTRSTKK.

The protein belongs to the histone H1/H5 family. HCT subfamily.

Might have a role analogous to that of eukaryotic histone proteins. This Chlamydia trachomatis serovar L2 (strain ATCC VR-902B / DSM 19102 / 434/Bu) protein is Histone H1-like protein Hc1 (hctA).